The chain runs to 110 residues: UPF0060 membrane protein MMAR_2961 (110 aa).

4 consecutive transmembrane segments (helical) span residues 6–26, 32–52, 61–81, and 90–110; these read ILLF…VWQG, GLAW…VATL, ILAA…MAFD, and IVGA…PRAH.

It belongs to the UPF0060 family.

It localises to the cell membrane. In Mycobacterium marinum (strain ATCC BAA-535 / M), this protein is UPF0060 membrane protein MMAR_2961.